The chain runs to 168 residues: MLPSALLRRPGLGRLVRQVRLYAEAAAAQAPAAGPGQMSFTFASPTQVFFNSANVRQVDVPTQTGAFGILAAHVPTLQVLRPGLVVVHAEDGTTSKYFVSSGSVTVNADSSVQLLAEEAVTLDMLDLGAAKANLEKAQSELLGAADEATRAEIQIRIEANEALVKALE.

Residues 1–22 (MLPSALLRRPGLGRLVRQVRLY) constitute a mitochondrion transit peptide. Residues Lys136 and Lys165 each carry the N6-acetyllysine; alternate modification. N6-succinyllysine; alternate is present on residues Lys136 and Lys165.

It belongs to the ATPase epsilon chain family. Component of the ATP synthase complex composed at least of ATP5F1A/subunit alpha, ATP5F1B/subunit beta, ATP5MC1/subunit c (homooctomer), MT-ATP6/subunit a, MT-ATP8/subunit 8, ATP5ME/subunit e, ATP5MF/subunit f, ATP5MG/subunit g, ATP5MK/subunit k, ATP5MJ/subunit j, ATP5F1C/subunit gamma, ATP5F1D/subunit delta, ATP5F1E/subunit epsilon, ATP5PF/subunit F6, ATP5PB/subunit b, ATP5PD/subunit d, ATP5PO/subunit OSCP. ATP synthase complex consists of a soluble F(1) head domain (subunits alpha(3) and beta(3)) - the catalytic core - and a membrane F(0) domain - the membrane proton channel (subunits c, a, 8, e, f, g, k and j). These two domains are linked by a central stalk (subunits gamma, delta, and epsilon) rotating inside the F1 region and a stationary peripheral stalk (subunits F6, b, d, and OSCP). Component of a complex composed at least by ATPIF1, ATP5F1A, ATP5F1B, ATP5F1C AND ATP5F1E.

The protein resides in the mitochondrion. Its subcellular location is the mitochondrion inner membrane. Its function is as follows. Subunit delta, of the mitochondrial membrane ATP synthase complex (F(1)F(0) ATP synthase or Complex V) that produces ATP from ADP in the presence of a proton gradient across the membrane which is generated by electron transport complexes of the respiratory chain. ATP synthase complex consist of a soluble F(1) head domain - the catalytic core - and a membrane F(1) domain - the membrane proton channel. These two domains are linked by a central stalk rotating inside the F(1) region and a stationary peripheral stalk. During catalysis, ATP synthesis in the catalytic domain of F(1) is coupled via a rotary mechanism of the central stalk subunits to proton translocation. In vivo, can only synthesize ATP although its ATP hydrolase activity can be activated artificially in vitro. With the central stalk subunit gamma, is essential for the biogenesis of F(1) catalytic part of the ATP synthase complex namely in the formation of F1 assembly intermediate. This Bos taurus (Bovine) protein is ATP synthase F(1) complex subunit delta, mitochondrial.